A 476-amino-acid chain; its full sequence is Angiotensinogen (476 aa).

The first 24 residues, 1–24 (MAPAGMSLRATILCLLAWAGLAAG), serve as a signal peptide directing secretion. 4 N-linked (GlcNAc...) asparagine glycosylation sites follow: asparagine 38, asparagine 161, asparagine 295, and asparagine 319. Cysteine 42 and cysteine 162 are disulfide-bonded.

This sequence belongs to the serpin family. In response to low blood pressure, the enzyme renin/REN cleaves angiotensinogen to produce angiotensin-1. Angiotensin-1 is a substrate of ACE (angiotensin converting enzyme) that removes a dipeptide to yield the physiologically active peptide angiotensin-2. Angiotensin-1 and angiotensin-2 can be further processed to generate angiotensin-3, angiotensin-4. Angiotensin 1-9 is cleaved from angiotensin-1 by ACE2 and can be further processed by ACE to produce angiotensin 1-7, angiotensin 1-5 and angiotensin 1-4. Angiotensin 1-7 has also been proposed to be cleaved from angiotensin-2 by ACE2 or from angiotensin-1 by MME (neprilysin). In terms of processing, the disulfide bond is labile. Angiotensinogen is present in the circulation in a near 40:60 ratio with the oxidized disulfide-bonded form, which preferentially interacts with receptor-bound renin.

It is found in the secreted. In terms of biological role, essential component of the renin-angiotensin system (RAS), a potent regulator of blood pressure, body fluid and electrolyte homeostasis. Its function is as follows. Acts directly on vascular smooth muscle as a potent vasoconstrictor, affects cardiac contractility and heart rate through its action on the sympathetic nervous system, and alters renal sodium and water absorption through its ability to stimulate the zona glomerulosa cells of the adrenal cortex to synthesize and secrete aldosterone. Acts by binding to angiotensin receptors AGTR1 and AGTR2. Also binds the DEAR/FBXW7-AS1 receptor. Functionally, stimulates aldosterone release. Is a ligand for the G-protein coupled receptor MAS1. Has vasodilator and antidiuretic effects. Has an antithrombotic effect that involves MAS1-mediated release of nitric oxide from platelets. This Gorilla gorilla gorilla (Western lowland gorilla) protein is Angiotensinogen (AGT).